The sequence spans 274 residues: ATP synthase subunit b 2 (274 aa).

Residues 2 to 22 (HIDWFVLLAQLVNFLILIYLL) form a helical membrane-spanning segment.

It belongs to the ATPase B chain family. In terms of assembly, F-type ATPases have 2 components, F(1) - the catalytic core - and F(0) - the membrane proton channel. F(1) has five subunits: alpha(3), beta(3), gamma(1), delta(1), epsilon(1). F(0) has three main subunits: a(1), b(2) and c(10-14). The alpha and beta chains form an alternating ring which encloses part of the gamma chain. F(1) is attached to F(0) by a central stalk formed by the gamma and epsilon chains, while a peripheral stalk is formed by the delta and b chains.

The protein resides in the cell inner membrane. F(1)F(0) ATP synthase produces ATP from ADP in the presence of a proton or sodium gradient. F-type ATPases consist of two structural domains, F(1) containing the extramembraneous catalytic core and F(0) containing the membrane proton channel, linked together by a central stalk and a peripheral stalk. During catalysis, ATP synthesis in the catalytic domain of F(1) is coupled via a rotary mechanism of the central stalk subunits to proton translocation. In terms of biological role, component of the F(0) channel, it forms part of the peripheral stalk, linking F(1) to F(0). The sequence is that of ATP synthase subunit b 2 from Syntrophus aciditrophicus (strain SB).